A 433-amino-acid polypeptide reads, in one-letter code: Enolase (433 aa).

Gln167 provides a ligand contact to (2R)-2-phosphoglycerate. The Proton donor role is filled by Glu209. Mg(2+) contacts are provided by Asp246, Glu291, and Asp318. Residues Lys343, Arg372, Ser373, and Lys394 each contribute to the (2R)-2-phosphoglycerate site. The active-site Proton acceptor is the Lys343.

Belongs to the enolase family. In terms of assembly, component of the RNA degradosome, a multiprotein complex involved in RNA processing and mRNA degradation. Mg(2+) serves as cofactor.

Its subcellular location is the cytoplasm. The protein resides in the secreted. The protein localises to the cell surface. It catalyses the reaction (2R)-2-phosphoglycerate = phosphoenolpyruvate + H2O. It functions in the pathway carbohydrate degradation; glycolysis; pyruvate from D-glyceraldehyde 3-phosphate: step 4/5. In terms of biological role, catalyzes the reversible conversion of 2-phosphoglycerate (2-PG) into phosphoenolpyruvate (PEP). It is essential for the degradation of carbohydrates via glycolysis. The polypeptide is Enolase (Photobacterium profundum (strain SS9)).